A 592-amino-acid chain; its full sequence is Inactive metallocarboxypeptidase ecm14 (592 aa).

A signal peptide spans 1 to 22; the sequence is MYRQDHVFVVLCAVLLAGQVTA. Residues 23-175 constitute a propeptide that is removed on maturation; that stretch reads VPAGTGINPH…AIYESRYPTR (153 aa). Positions 203–524 constitute a Peptidase M14 domain; the sequence is HYQPFNVILQ…NSVLVLGHFL (322 aa). Zn(2+) is bound by residues H267 and E270. Substrate-binding positions include 267 to 270, R325, and 342 to 343; these read HARE and DR. C336 and C359 are disulfide-bonded. Residue N383 is glycosylated (N-linked (GlcNAc...) asparagine). Residue H399 participates in Zn(2+) binding. Residue 400–401 coordinates substrate; that stretch reads SY. N-linked (GlcNAc...) asparagine glycosylation occurs at N548.

The protein belongs to the peptidase M14 family. Zn(2+) serves as cofactor.

Its subcellular location is the vacuole. It is found in the secreted. Inactive carboxypeptidase that may play a role in cell wall organization and biogenesis. This is Inactive metallocarboxypeptidase ecm14 (ecm14) from Talaromyces stipitatus (strain ATCC 10500 / CBS 375.48 / QM 6759 / NRRL 1006) (Penicillium stipitatum).